A 1282-amino-acid chain; its full sequence is MADASQATTPAAEGNPVPEVPETQTPPADVNGTTEQEQTEEGAEQALEDQPFVVTIVLPNTTETLDIPVSPMEQIHEIRQSIIEHPIAIEFSCFHLEFNGKKINDFIQVSDVEGLEHGAQLHLVEDPYTEKEARIHLIRIRELIGASGDRTDTVHGVLAGVSVHDDIVVENPDAPEAEIKEYDFQAPADLAILLPKETGPAPKSIKSISLSPWNPPPAYWRQKGHLLYLVIQTNEGEQHHVTAHVGGFFVNRCSNAKFDPLPKPAPKDCASHSLFTLLKKLSPSFEESFKKFQEFSSQKDPLATFQVGNTIPSAPWLVPSINSSLIAHEADNTRSQETYLLGGAENVDSLRDWNEEFQSAKELPKETIQDRVFRERLLAKLFADYTDAAARGAVLVARGEVAPLNPTEDKDAQIFVYNNIFFSFGADGVGTFTSEGGDEAARVATGKDVLGVKLVNQLDIDGLYTPGTVVIDYLGKRIVGQSIVPGIFKQPEAGENQIHYGAVDGKDIVAADERFAPSFEKLATALRVKKHAVWDKENKRHDLEASVEMKGLLGTDGRKYVLDLYRITPLDIAWMEESGPEGSEYPHRMTVLRPELVEALAKQKTREYVQAELLKRGIIKKPEEKKEGEEATEEAKTEEIKTEEAEKSEEPKAEETEKTEEASESTEVAEKKDEEAAKEDERIDISNFKFALNPDVFSGQVPQTEEEKAEMAQDEQDVRDACTYLRDSVIPALLNDLKESDISFPMDGRSLTRLLHRRGINMRYLGKLATLSEGTRVECFRQLCVREMIARAFKHVAAKYLRYLPLPLTSACLAHLLNCFLGFGLNSSPVAEVDEELRKVFSDADYSFEQVTPENLREAMQQEILHRFRFTLEDGWYNQLQHVQMLREVSQKLGVQIQNKKYAFVATEGEAEPVAEKPVAPAPAPVEDGNKKKKKKKAARETSPVAAAPVATVPHTFSPDDFVNVVPIVKDSTPRSALAEEALEAGRLSIYQNQKKLGEDLLLESLSLHEQIYGLVHPEVAQMYHTLSQLYYQLGQKDAAVELSRKAAIVAERTVGLDSSETVLNYLNLSLFLHQRGDSKEALLYARHALDLWKVIYGPDHPDTITTMNNYAVMLQSIKAYHESRRWFEESLRVCNKVFGEQTVHSATLLFQLAQALALDQDAKKAVDRMRESYNIFKTLLGPEDKNTKEAEHWLTQLTHNAVSVAKATKELQARRAKGSLGFSPRNATAGAAGIGSVVPSAVGVDNRNIDELVKFVENSEKKKGGKKSKGPSNPKKRGGKA.

The tract at residues 1 to 50 (MADASQATTPAAEGNPVPEVPETQTPPADVNGTTEQEQTEEGAEQALEDQ) is disordered. The span at 16–36 (PVPEVPETQTPPADVNGTTEQ) shows a compositional bias: low complexity. Positions 37-47 (EQTEEGAEQAL) are enriched in acidic residues. One can recognise a Clu domain in the interval 331 to 575 (DNTRSQETYL…RITPLDIAWM (245 aa)). Positions 623–650 (EEKKEGEEATEEAKTEEIKTEEAEKSEE) form a coiled coil. Basic and acidic residues-rich tracts occupy residues 624 to 661 (EKKEGEEATEEAKTEEIKTEEAEKSEEPKAEETEKTEE) and 668 to 680 (VAEKKDEEAAKED). Disordered regions lie at residues 624–680 (EKKE…AKED) and 913–945 (PVAEKPVAPAPAPVEDGNKKKKKKKAARETSPV). TPR repeat units lie at residues 1021-1054 (AQMYHTLSQLYYQLGQKDAAVELSRKAAIVAERT), 1063-1096 (VLNYLNLSLFLHQRGDSKEALLYARHALDLWKVI), and 1105-1138 (ITTMNNYAVMLQSIKAYHESRRWFEESLRVCNKV). The disordered stretch occupies residues 1257-1282 (VENSEKKKGGKKSKGPSNPKKRGGKA). Over residues 1264–1282 (KGGKKSKGPSNPKKRGGKA) the composition is skewed to basic residues.

This sequence belongs to the CLU family. As to quaternary structure, may associate with the eukaryotic translation initiation factor 3 (eIF-3) complex.

The protein resides in the cytoplasm. Functionally, mRNA-binding protein involved in proper cytoplasmic distribution of mitochondria. The polypeptide is Clustered mitochondria protein homolog (Neurospora crassa (strain ATCC 24698 / 74-OR23-1A / CBS 708.71 / DSM 1257 / FGSC 987)).